The primary structure comprises 227 residues: Cytochrome c oxidase subunit 2 (227 aa).

Residues 1 to 14 (MAYPVQLGFQDAAS) are Mitochondrial intermembrane-facing. The helical transmembrane segment at 15–45 (PIMEELLYFHDHTLMIVFLISSLVLYIISLM) threads the bilayer. Topologically, residues 46 to 59 (LTTKLMHTSTMDAQ) are mitochondrial matrix. Residues 60-87 (EVETVWTILPAIILILIALPSLRILYMM) form a helical membrane-spanning segment. The Mitochondrial intermembrane portion of the chain corresponds to 88-227 (DEITTPSLTL…HFEEWLLSMF (140 aa)). Cu cation is bound by residues H161, C196, E198, C200, H204, and M207. Position 198 (E198) interacts with Mg(2+).

Belongs to the cytochrome c oxidase subunit 2 family. In terms of assembly, component of the cytochrome c oxidase (complex IV, CIV), a multisubunit enzyme composed of 14 subunits. The complex is composed of a catalytic core of 3 subunits MT-CO1, MT-CO2 and MT-CO3, encoded in the mitochondrial DNA, and 11 supernumerary subunits COX4I, COX5A, COX5B, COX6A, COX6B, COX6C, COX7A, COX7B, COX7C, COX8 and NDUFA4, which are encoded in the nuclear genome. The complex exists as a monomer or a dimer and forms supercomplexes (SCs) in the inner mitochondrial membrane with NADH-ubiquinone oxidoreductase (complex I, CI) and ubiquinol-cytochrome c oxidoreductase (cytochrome b-c1 complex, complex III, CIII), resulting in different assemblies (supercomplex SCI(1)III(2)IV(1) and megacomplex MCI(2)III(2)IV(2)). Found in a complex with TMEM177, COA6, COX18, COX20, SCO1 and SCO2. Interacts with TMEM177 in a COX20-dependent manner. Interacts with COX20. Interacts with COX16. Requires Cu cation as cofactor.

It is found in the mitochondrion inner membrane. The enzyme catalyses 4 Fe(II)-[cytochrome c] + O2 + 8 H(+)(in) = 4 Fe(III)-[cytochrome c] + 2 H2O + 4 H(+)(out). Its function is as follows. Component of the cytochrome c oxidase, the last enzyme in the mitochondrial electron transport chain which drives oxidative phosphorylation. The respiratory chain contains 3 multisubunit complexes succinate dehydrogenase (complex II, CII), ubiquinol-cytochrome c oxidoreductase (cytochrome b-c1 complex, complex III, CIII) and cytochrome c oxidase (complex IV, CIV), that cooperate to transfer electrons derived from NADH and succinate to molecular oxygen, creating an electrochemical gradient over the inner membrane that drives transmembrane transport and the ATP synthase. Cytochrome c oxidase is the component of the respiratory chain that catalyzes the reduction of oxygen to water. Electrons originating from reduced cytochrome c in the intermembrane space (IMS) are transferred via the dinuclear copper A center (CU(A)) of subunit 2 and heme A of subunit 1 to the active site in subunit 1, a binuclear center (BNC) formed by heme A3 and copper B (CU(B)). The BNC reduces molecular oxygen to 2 water molecules using 4 electrons from cytochrome c in the IMS and 4 protons from the mitochondrial matrix. The polypeptide is Cytochrome c oxidase subunit 2 (MT-CO2) (Propithecus tattersalli (Golden-crowned Sifaka)).